A 215-amino-acid polypeptide reads, in one-letter code: 3-demethoxyubiquinol 3-hydroxylase (215 aa).

Residues glutamate 64, glutamate 94, histidine 97, glutamate 146, glutamate 178, and histidine 181 each contribute to the Fe cation site.

It belongs to the COQ7 family. Requires Fe cation as cofactor.

It localises to the cell membrane. The catalysed reaction is a 5-methoxy-2-methyl-3-(all-trans-polyprenyl)benzene-1,4-diol + AH2 + O2 = a 3-demethylubiquinol + A + H2O. It functions in the pathway cofactor biosynthesis; ubiquinone biosynthesis. Its function is as follows. Catalyzes the hydroxylation of 2-nonaprenyl-3-methyl-6-methoxy-1,4-benzoquinol during ubiquinone biosynthesis. This chain is 3-demethoxyubiquinol 3-hydroxylase, found in Ectopseudomonas mendocina (strain ymp) (Pseudomonas mendocina).